The primary structure comprises 112 residues: Small ribosomal subunit protein bS6 (112 aa).

Belongs to the bacterial ribosomal protein bS6 family.

Functionally, binds together with bS18 to 16S ribosomal RNA. This is Small ribosomal subunit protein bS6 from Chlamydia felis (strain Fe/C-56) (Chlamydophila felis).